A 211-amino-acid chain; its full sequence is Ribonuclease HII (211 aa).

An RNase H type-2 domain is found at 2–211 (MLILGVDEAG…TAQRLKASSV (210 aa)). The a divalent metal cation site is built by Asp8, Glu9, and Asp106.

Belongs to the RNase HII family. Mn(2+) is required as a cofactor. The cofactor is Mg(2+).

It is found in the cytoplasm. It catalyses the reaction Endonucleolytic cleavage to 5'-phosphomonoester.. Endonuclease that specifically degrades the RNA of RNA-DNA hybrids. The chain is Ribonuclease HII from Methanothrix thermoacetophila (strain DSM 6194 / JCM 14653 / NBRC 101360 / PT) (Methanosaeta thermophila).